The primary structure comprises 401 residues: 3-sulfinopropanoyl-CoA desulfinase (401 aa).

Residues 121 to 124 (ICIS), S130, and 153 to 156 (YWIT) each bind FAD. Position 243 to 244 (243 to 244 (YN)) interacts with substrate. Residues R272, Q339, S343, 366–370 (GGTAQ), and Q387 each bind FAD.

The protein belongs to the acyl-CoA dehydrogenase family. Homotetramer. FAD is required as a cofactor.

The enzyme catalyses 3-sulfinopropanoyl-CoA + H2O = propanoyl-CoA + sulfite + H(+). Its function is as follows. Catalyzes the conversion 3-sulfinopropanoyl-CoA (3SP-CoA) to propanoyl-CoA by abstraction of sulfite. Does not show dehydrogenase activity. Involved in the degradation of 3,3'-dithiodipropionate (DTDP), a sulfur-containing precursor substrate for biosynthesis of polythioesters (PTEs). The protein is 3-sulfinopropanoyl-CoA desulfinase of Advenella mimigardefordensis (strain DSM 17166 / LMG 22922 / DPN7).